Here is a 50-residue protein sequence, read N- to C-terminus: U37-theraphotoxin-Cg1b (50 aa).

An N-terminal signal peptide occupies residues 1–19 (MRVLLIIAGLALLSVVCYT).

This sequence belongs to the neurotoxin 10 (Hwtx-1) family. 67 (Jztx-67) subfamily. As to expression, expressed by the venom gland.

The protein localises to the secreted. The polypeptide is U37-theraphotoxin-Cg1b (Chilobrachys guangxiensis (Chinese earth tiger tarantula)).